A 103-amino-acid polypeptide reads, in one-letter code: Mitochondrial import inner membrane translocase subunit TIM13 (103 aa).

Residues 1 to 25 (MALSSIFGGGSPSQQSNLPTSSASS) form a disordered region. Residues 12–25 (PSQQSNLPTSSASS) show a composition bias toward polar residues. The short motif at 55–75 (CFEKCLMAPYTSKQDTCVDQC) is the Twin CX3C motif element. 2 cysteine pairs are disulfide-bonded: Cys55/Cys75 and Cys59/Cys71.

The protein belongs to the small Tim family. As to quaternary structure, heterohexamer; composed of 3 copies of TIM8 and 3 copies of TIM13, named soluble 70 kDa complex. Associates with the TIM22 complex, whose core is composed of TIM22 and TIM54. Interacts with the transmembrane regions of multi-pass transmembrane proteins in transit.

Its subcellular location is the mitochondrion inner membrane. Its function is as follows. Mitochondrial intermembrane chaperone that participates in the import and insertion of some multi-pass transmembrane proteins into the mitochondrial inner membrane. Also required for the transfer of beta-barrel precursors from the TOM complex to the sorting and assembly machinery (SAM complex) of the outer membrane. Acts as a chaperone-like protein that protects the hydrophobic precursors from aggregation and guide them through the mitochondrial intermembrane space. The TIM8-TIM13 complex is non essential and only mediates the import of few proteins, while the predominant TIM9-TIM10 70 kDa complex is crucial and mediates the import of much more proteins. The chain is Mitochondrial import inner membrane translocase subunit TIM13 (TIM13) from Eremothecium gossypii (strain ATCC 10895 / CBS 109.51 / FGSC 9923 / NRRL Y-1056) (Yeast).